Consider the following 636-residue polypeptide: Bifunctional phosphonoacetaldehyde hydrolase/aminoethylphosphonate transaminase (636 aa).

Residues 1 to 276 (MKKIYGEKIK…IKSDFVPEND (276 aa)) form a phosphonoacetaldehyde hydrolase region. Asp-15 acts as the Nucleophile in catalysis. Mg(2+)-binding residues include Asp-15 and Ala-17. Lys-56 functions as the Schiff-base intermediate with substrate in the catalytic mechanism. A Mg(2+)-binding site is contributed by Asp-189. The 2-aminoethylphosphonate--pyruvate transaminase stretch occupies residues 277–636 (YILLTPGPLS…ADVIEKFINR (360 aa)). Position 465 is an N6-(pyridoxal phosphate)lysine (Lys-465).

This sequence in the N-terminal section; belongs to the HAD-like hydrolase superfamily. PhnX family. It in the C-terminal section; belongs to the class-V pyridoxal-phosphate-dependent aminotransferase family. PhnW subfamily. Homodimer. The cofactor is Mg(2+). Requires pyridoxal 5'-phosphate as cofactor.

It carries out the reaction (2-aminoethyl)phosphonate + pyruvate = phosphonoacetaldehyde + L-alanine. The catalysed reaction is phosphonoacetaldehyde + H2O = acetaldehyde + phosphate + H(+). Functionally, involved in phosphonate degradation. The sequence is that of Bifunctional phosphonoacetaldehyde hydrolase/aminoethylphosphonate transaminase (phnXW) from Clostridioides difficile (strain 630) (Peptoclostridium difficile).